Consider the following 95-residue polypeptide: Small ribosomal subunit protein bS18 (95 aa).

Belongs to the bacterial ribosomal protein bS18 family. Part of the 30S ribosomal subunit. Forms a tight heterodimer with protein bS6.

In terms of biological role, binds as a heterodimer with protein bS6 to the central domain of the 16S rRNA, where it helps stabilize the platform of the 30S subunit. This Rickettsia peacockii (strain Rustic) protein is Small ribosomal subunit protein bS18.